Here is a 775-residue protein sequence, read N- to C-terminus: Protein U58 (775 aa).

Belongs to the herpesviridae UL87 family.

The chain is Protein U58 (U58) from Homo sapiens (Human).